A 434-amino-acid polypeptide reads, in one-letter code: Trigger factor (434 aa).

Residues 161–246 enclose the PPIase FKBP-type domain; that stretch reads EDRVTVDFSG…LKKVEERELP (86 aa).

The protein belongs to the FKBP-type PPIase family. Tig subfamily.

It localises to the cytoplasm. The catalysed reaction is [protein]-peptidylproline (omega=180) = [protein]-peptidylproline (omega=0). Functionally, involved in protein export. Acts as a chaperone by maintaining the newly synthesized protein in an open conformation. Functions as a peptidyl-prolyl cis-trans isomerase. The chain is Trigger factor from Serratia proteamaculans (strain 568).